We begin with the raw amino-acid sequence, 148 residues long: MAEVNGCQLPEDRLYYINPDKNAFIWAKEEDGVFTIGLTSVAAAMAGRLVAYTPKKVGKAVKKDKSVATIESGKWVGPVPSPFDGEIVEVNEALKGNPALVNDDPYGQGWIAKVKPANPEEAKSVLVDANKAAELLQPIVQEKGVKCG.

A Lipoyl-binding domain is found at 33–115 (VFTIGLTSVA…YGQGWIAKVK (83 aa)). An N6-lipoyllysine modification is found at Lys-74.

Belongs to the GcvH family. The glycine cleavage system is composed of four proteins: P, T, L and H. Requires (R)-lipoate as cofactor.

Functionally, the glycine cleavage system catalyzes the degradation of glycine. The H protein shuttles the methylamine group of glycine from the P protein to the T protein. The polypeptide is Glycine cleavage system H protein 5 (Aquifex aeolicus (strain VF5)).